Here is a 290-residue protein sequence, read N- to C-terminus: Ribosomal RNA small subunit methyltransferase A (290 aa).

6 residues coordinate S-adenosyl-L-methionine: Asn27, Leu29, Gly54, Glu75, Asp100, and Asn125.

The protein belongs to the class I-like SAM-binding methyltransferase superfamily. rRNA adenine N(6)-methyltransferase family. RsmA subfamily.

The protein localises to the cytoplasm. It catalyses the reaction adenosine(1518)/adenosine(1519) in 16S rRNA + 4 S-adenosyl-L-methionine = N(6)-dimethyladenosine(1518)/N(6)-dimethyladenosine(1519) in 16S rRNA + 4 S-adenosyl-L-homocysteine + 4 H(+). Functionally, specifically dimethylates two adjacent adenosines (A1518 and A1519) in the loop of a conserved hairpin near the 3'-end of 16S rRNA in the 30S particle. May play a critical role in biogenesis of 30S subunits. This Streptococcus sanguinis (strain SK36) protein is Ribosomal RNA small subunit methyltransferase A.